The sequence spans 182 residues: Probable RNA 2'-phosphotransferase (182 aa).

The protein belongs to the KptA/TPT1 family.

In terms of biological role, removes the 2'-phosphate from RNA via an intermediate in which the phosphate is ADP-ribosylated by NAD followed by a presumed transesterification to release the RNA and generate ADP-ribose 1''-2''-cyclic phosphate (APPR&gt;P). May function as an ADP-ribosylase. This is Probable RNA 2'-phosphotransferase from Pseudomonas fluorescens (strain ATCC BAA-477 / NRRL B-23932 / Pf-5).